Here is a 333-residue protein sequence, read N- to C-terminus: Homeobox protein engrailed-2 (333 aa).

3 disordered regions span residues Met-1–Met-49, Gly-95–Leu-206, and Ser-223–Ala-250. 2 stretches are compositionally biased toward gly residues: residues Pro-25–Ser-36 and Gly-95–Gly-117. Composition is skewed to low complexity over residues Pro-142–Pro-151 and Leu-191–Ser-200. Positions Asp-244–Thr-303 form a DNA-binding region, homeobox.

Belongs to the engrailed homeobox family.

The protein resides in the nucleus. This Homo sapiens (Human) protein is Homeobox protein engrailed-2 (EN2).